Here is a 140-residue protein sequence, read N- to C-terminus: MAIERTFSMIKPDATRRNLTGAITAKLEAAGLRVVASKRVWMSLREAEGFYAVHKDRPFFGELTEFMSSGPTIVQVLEGENAIAKNREVMGATNPANADEGTIRKEFALSIGENSVHGSDAPETAAEEIAYWFSGTEIVG.

Residues K11, F59, R87, T93, R104, and N114 each coordinate ATP. Residue H117 is the Pros-phosphohistidine intermediate of the active site.

Belongs to the NDK family. In terms of assembly, homotetramer. It depends on Mg(2+) as a cofactor.

It is found in the cytoplasm. It carries out the reaction a 2'-deoxyribonucleoside 5'-diphosphate + ATP = a 2'-deoxyribonucleoside 5'-triphosphate + ADP. The enzyme catalyses a ribonucleoside 5'-diphosphate + ATP = a ribonucleoside 5'-triphosphate + ADP. Functionally, major role in the synthesis of nucleoside triphosphates other than ATP. The ATP gamma phosphate is transferred to the NDP beta phosphate via a ping-pong mechanism, using a phosphorylated active-site intermediate. This chain is Nucleoside diphosphate kinase, found in Brucella anthropi (strain ATCC 49188 / DSM 6882 / CCUG 24695 / JCM 21032 / LMG 3331 / NBRC 15819 / NCTC 12168 / Alc 37) (Ochrobactrum anthropi).